Reading from the N-terminus, the 161-residue chain is Phosphopantetheine adenylyltransferase (161 aa).

Residue S11 participates in substrate binding. ATP-binding positions include 11–12 (SF) and H19. Positions 43, 75, and 89 each coordinate substrate. Residues 90–92 (GLR), E100, and 125–131 (YSFISSS) each bind ATP.

It belongs to the bacterial CoaD family. As to quaternary structure, homohexamer. The cofactor is Mg(2+).

It localises to the cytoplasm. It carries out the reaction (R)-4'-phosphopantetheine + ATP + H(+) = 3'-dephospho-CoA + diphosphate. It functions in the pathway cofactor biosynthesis; coenzyme A biosynthesis; CoA from (R)-pantothenate: step 4/5. In terms of biological role, reversibly transfers an adenylyl group from ATP to 4'-phosphopantetheine, yielding dephospho-CoA (dPCoA) and pyrophosphate. The sequence is that of Phosphopantetheine adenylyltransferase from Staphylococcus saprophyticus subsp. saprophyticus (strain ATCC 15305 / DSM 20229 / NCIMB 8711 / NCTC 7292 / S-41).